The primary structure comprises 364 residues: DNA replication and repair protein RecF (364 aa).

30-37 (GNNGQGKT) contributes to the ATP binding site.

The protein belongs to the RecF family.

The protein localises to the cytoplasm. Functionally, the RecF protein is involved in DNA metabolism; it is required for DNA replication and normal SOS inducibility. RecF binds preferentially to single-stranded, linear DNA. It also seems to bind ATP. This Geobacter sp. (strain M21) protein is DNA replication and repair protein RecF.